Here is a 216-residue protein sequence, read N- to C-terminus: Ethylene-inducing xylanase (216 aa).

The N-terminal stretch at 1-19 (MVSFSSLFVAACAAVTAFA) is a signal peptide. One can recognise a GH11 domain in the interval 28-216 (AITTSQQGTS…SSGSSDITVS (189 aa)). The active-site Nucleophile is E112. E203 acts as the Proton donor in catalysis.

Belongs to the glycosyl hydrolase 11 (cellulase G) family.

The protein resides in the secreted. The enzyme catalyses Endohydrolysis of (1-&gt;4)-beta-D-xylosidic linkages in xylans.. It functions in the pathway glycan degradation; xylan degradation. Endo-1,4-beta-xylanase involved in the hydrolysis of xylan, a major structural heterogeneous polysaccharide found in plant biomass representing the second most abundant polysaccharide in the biosphere, after cellulose. Acts as a pathogen-associated molecular pattern (PAMP) that can trigger plant cell death. Triggers a series of immune responses in citrus fruit and enhanced the resistance of citrus and other fruit against fungal pathogens. This is Ethylene-inducing xylanase from Penicillium digitatum (strain Pd1 / CECT 20795) (Green mold).